The sequence spans 494 residues: MSKLLILLLLSLVASIFSTPLDDYVNAPDDTYKWTLNNTIEYETFTGYILELTSQTWMAEKSDWPVWKHWVSICVPKGVTTTTTFIYVDGGSNDNWKVPGSMDQTIEIVCLSSGSVSVGLTQIPNQPIIFNNDGVQRFEDDLVAYTWRQFLGNTSEPLWLARLPMTKAVVKCMDAVQEFGKTIGYNSENFVIAGASKRGWTTWLAGVVDPRIIAIVPIVMPILNMIPNMGHQFYAYGEWSFALNDYTGQGVMDYLNGPQMVELAAIVDPFSYRDRYTMPIYAIASSDDEFFLPDSPQFFWNNLTATPEKHLRIVPNAEHSLMGHQIDIILSIVTFVRLLITNQPRPTFTWDITYSEDLNSGTIVLTVPEGGIIPYKVKVWTAVTESTTRRDFRIITCMDITKCIQFIIWDPSDITPTSTGVYSITLSKPDAGWRAFFLEAEYLYAKNSIDDEYTLKFTSEVAIVPNTLPFGSCSEYNACGDGSQGDSASSTATL.

The signal sequence occupies residues 1-18 (MSKLLILLLLSLVASIFS). N-linked (GlcNAc...) asparagine glycosylation is found at Asn37, Asn153, and Asn302.

This sequence belongs to the pqaA family. As to quaternary structure, interacts with cfaD.

Its subcellular location is the secreted. Inhibitor that slows proliferation of secreting cells (also known as chalone). May function by binding to cell surface receptors. Requires cfaD for activity. Overexpression slows proliferation. In Dictyostelium discoideum (Social amoeba), this protein is Autocrine proliferation repressor protein A (aprA).